The sequence spans 80 residues: Exodeoxyribonuclease 7 small subunit (80 aa).

This sequence belongs to the XseB family. As to quaternary structure, heterooligomer composed of large and small subunits.

It is found in the cytoplasm. The enzyme catalyses Exonucleolytic cleavage in either 5'- to 3'- or 3'- to 5'-direction to yield nucleoside 5'-phosphates.. Its function is as follows. Bidirectionally degrades single-stranded DNA into large acid-insoluble oligonucleotides, which are then degraded further into small acid-soluble oligonucleotides. The protein is Exodeoxyribonuclease 7 small subunit of Halalkalibacterium halodurans (strain ATCC BAA-125 / DSM 18197 / FERM 7344 / JCM 9153 / C-125) (Bacillus halodurans).